A 303-amino-acid chain; its full sequence is Coenzyme PQQ synthesis protein B (303 aa).

The protein belongs to the PqqB family.

It participates in cofactor biosynthesis; pyrroloquinoline quinone biosynthesis. In terms of biological role, may be involved in the transport of PQQ or its precursor to the periplasm. The sequence is that of Coenzyme PQQ synthesis protein B from Acinetobacter baumannii (strain AB0057).